The primary structure comprises 173 residues: NADH-ubiquinone oxidoreductase chain 6 (173 aa).

Transmembrane regions (helical) follow at residues 1-21 (MTYF…AVAS), 27-47 (YGVV…LSLG), 48-68 (VSFV…VVFV), 87-107 (VVGY…VGGF), and 139-159 (CGVG…FVVL).

Belongs to the complex I subunit 6 family.

It localises to the mitochondrion membrane. It carries out the reaction a ubiquinone + NADH + 5 H(+)(in) = a ubiquinol + NAD(+) + 4 H(+)(out). In terms of biological role, core subunit of the mitochondrial membrane respiratory chain NADH dehydrogenase (Complex I) that is believed to belong to the minimal assembly required for catalysis. Complex I functions in the transfer of electrons from NADH to the respiratory chain. The immediate electron acceptor for the enzyme is believed to be ubiquinone. This chain is NADH-ubiquinone oxidoreductase chain 6 (MT-ND6), found in Ptychoramphus aleuticus (Cassin's auklet).